We begin with the raw amino-acid sequence, 340 residues long: Methionyl-tRNA formyltransferase (340 aa).

110 to 113 (SLLP) contacts (6S)-5,6,7,8-tetrahydrofolate.

The protein belongs to the Fmt family.

The catalysed reaction is L-methionyl-tRNA(fMet) + (6R)-10-formyltetrahydrofolate = N-formyl-L-methionyl-tRNA(fMet) + (6S)-5,6,7,8-tetrahydrofolate + H(+). Attaches a formyl group to the free amino group of methionyl-tRNA(fMet). The formyl group appears to play a dual role in the initiator identity of N-formylmethionyl-tRNA by promoting its recognition by IF2 and preventing the misappropriation of this tRNA by the elongation apparatus. This chain is Methionyl-tRNA formyltransferase, found in Synechococcus sp. (strain WH7803).